The following is a 277-amino-acid chain: NADPH-dependent 7-cyano-7-deazaguanine reductase (277 aa).

Residue Val-83–Ser-85 coordinates substrate. Ser-85–Lys-86 contributes to the NADPH binding site. Cys-184 functions as the Thioimide intermediate in the catalytic mechanism. The Proton donor role is filled by Asp-191. A substrate-binding site is contributed by His-223–Glu-224. Residue Arg-252–Gly-253 coordinates NADPH.

The protein belongs to the GTP cyclohydrolase I family. QueF type 2 subfamily. Homodimer.

Its subcellular location is the cytoplasm. The catalysed reaction is 7-aminomethyl-7-carbaguanine + 2 NADP(+) = 7-cyano-7-deazaguanine + 2 NADPH + 3 H(+). It participates in tRNA modification; tRNA-queuosine biosynthesis. Its function is as follows. Catalyzes the NADPH-dependent reduction of 7-cyano-7-deazaguanine (preQ0) to 7-aminomethyl-7-deazaguanine (preQ1). The protein is NADPH-dependent 7-cyano-7-deazaguanine reductase of Cupriavidus metallidurans (strain ATCC 43123 / DSM 2839 / NBRC 102507 / CH34) (Ralstonia metallidurans).